The primary structure comprises 148 residues: MKIILTHEVSGLGTAGDVVDVKDGYARNYLVPRGFAIRWTKGGEKDVAQIRRARKIHEIATIEQANEIKAKLEGVKVRLAVRSGDAGRLFGSVTPADVAAAIKAAGGPDVDKRRVELGSPIKTLGGHQVSVRLHPEVAAKLGVEVVAA.

Belongs to the bacterial ribosomal protein bL9 family.

Functionally, binds to the 23S rRNA. In Streptomyces griseus subsp. griseus (strain JCM 4626 / CBS 651.72 / NBRC 13350 / KCC S-0626 / ISP 5235), this protein is Large ribosomal subunit protein bL9.